The primary structure comprises 674 residues: Primary amine oxidase (674 aa).

The N-terminal stretch at 1–25 is a signal peptide; the sequence is MASTTTMRLALFSVLTLLSFHAVVS. Residue asparagine 156 is glycosylated (N-linked (GlcNAc...) asparagine). A disulfide bridge links cysteine 162 with cysteine 183. The segment covering 226–236 has biased composition (polar residues); sequence ENTEYQVSKQS. A disordered region spans residues 226-251; it reads ENTEYQVSKQSPPFGPKQHSLTSHQP. 323 to 334 is a substrate binding site; sequence FFDSGEFGFGLS. The Proton acceptor role is filled by aspartate 325. The cysteines at positions 344 and 370 are disulfide-linked. A glycan (N-linked (GlcNAc...) asparagine) is linked at asparagine 389. Residue 409-414 participates in substrate binding; sequence VGNYDN. Tyrosine 412 (schiff-base intermediate with substrate; via topaquinone) is an active-site residue. The residue at position 412 (tyrosine 412) is a 2',4',5'-topaquinone. Cu cation-binding residues include histidine 467 and histidine 469. Mn(2+) contacts are provided by aspartate 476, phenylalanine 477, aspartate 478, aspartate 617, and isoleucine 618. A Cu cation-binding site is contributed by histidine 628.

Belongs to the copper/topaquinone oxidase family. As to quaternary structure, homodimer. Requires Cu cation as cofactor. Mn(2+) serves as cofactor. The cofactor is L-topaquinone. Topaquinone (TPQ) is generated by copper-dependent autoxidation of a specific tyrosyl residue.

It carries out the reaction a primary methyl amine + O2 + H2O = an aldehyde + H2O2 + NH4(+). In Pisum sativum (Garden pea), this protein is Primary amine oxidase.